The chain runs to 459 residues: tRNA modification GTPase MnmE (459 aa).

Residues arginine 20, glutamate 85, and arginine 124 each contribute to the (6S)-5-formyl-5,6,7,8-tetrahydrofolate site. In terms of domain architecture, TrmE-type G spans 221 to 380 (GLSTVIIGRP…LEMAIQSLFF (160 aa)). Asparagine 231 lines the K(+) pocket. Residues 231-236 (NVGKSS), 250-256 (TDIPGTT), and 275-278 (DTAG) contribute to the GTP site. Serine 235 contributes to the Mg(2+) binding site. K(+)-binding residues include threonine 250, isoleucine 252, and threonine 255. Threonine 256 lines the Mg(2+) pocket. Lysine 459 provides a ligand contact to (6S)-5-formyl-5,6,7,8-tetrahydrofolate.

The protein belongs to the TRAFAC class TrmE-Era-EngA-EngB-Septin-like GTPase superfamily. TrmE GTPase family. As to quaternary structure, homodimer. Heterotetramer of two MnmE and two MnmG subunits. It depends on K(+) as a cofactor.

The protein resides in the cytoplasm. Its function is as follows. Exhibits a very high intrinsic GTPase hydrolysis rate. Involved in the addition of a carboxymethylaminomethyl (cmnm) group at the wobble position (U34) of certain tRNAs, forming tRNA-cmnm(5)s(2)U34. In Bacillus pumilus (strain SAFR-032), this protein is tRNA modification GTPase MnmE.